A 150-amino-acid polypeptide reads, in one-letter code: Large ribosomal subunit protein bL9 (150 aa).

The protein belongs to the bacterial ribosomal protein bL9 family.

Its function is as follows. Binds to the 23S rRNA. The protein is Large ribosomal subunit protein bL9 of Polynucleobacter asymbioticus (strain DSM 18221 / CIP 109841 / QLW-P1DMWA-1) (Polynucleobacter necessarius subsp. asymbioticus).